Consider the following 469-residue polypeptide: 3-isopropylmalate dehydratase large subunit (469 aa).

Cys349, Cys410, and Cys413 together coordinate [4Fe-4S] cluster.

This sequence belongs to the aconitase/IPM isomerase family. LeuC type 1 subfamily. As to quaternary structure, heterodimer of LeuC and LeuD. It depends on [4Fe-4S] cluster as a cofactor.

The enzyme catalyses (2R,3S)-3-isopropylmalate = (2S)-2-isopropylmalate. The protein operates within amino-acid biosynthesis; L-leucine biosynthesis; L-leucine from 3-methyl-2-oxobutanoate: step 2/4. Catalyzes the isomerization between 2-isopropylmalate and 3-isopropylmalate, via the formation of 2-isopropylmaleate. In Azoarcus sp. (strain BH72), this protein is 3-isopropylmalate dehydratase large subunit.